The primary structure comprises 250 residues: Small ribosomal subunit protein uS3 (250 aa).

The region spanning 39 to 111 (IRTLIKNNYP…KVQINIFEVK (73 aa)) is the KH type-2 domain.

It belongs to the universal ribosomal protein uS3 family. In terms of assembly, part of the 30S ribosomal subunit. Forms a tight complex with proteins S10 and S14.

Its function is as follows. Binds the lower part of the 30S subunit head. Binds mRNA in the 70S ribosome, positioning it for translation. The chain is Small ribosomal subunit protein uS3 from Alder yellows phytoplasma.